The following is a 514-amino-acid chain: Cilia- and flagella-associated protein 53 (514 aa).

2 coiled-coil regions span residues 91–148 (IINI…RQDF) and 203–474 (KLWE…REFE).

Belongs to the CFAP53 family. In terms of assembly, microtubule inner protein component of sperm flagellar doublet microtubules. Interacts with PIERCE1 and PIERCE2; the interactions link outer dynein arms docking complex (ODA-DC) to the internal microtubule inner proteins (MIP) in cilium axoneme. Interacts with CCDC38. Interacts with CCDC42 and IFT88. Interacts with centriolar satellite proteins PIBF1/CEP90 and PCM1. Interacts with dyneins DNAIC1, DNAIC2 AND DNAH11 and with ODA-DC component ODAD4/TTC25. Expressed in skin fibroblasts (at protein level). Expressed in nasal respiratory epithelial cells (at protein level). Expressed in airway epithelial cells.

The protein localises to the cytoplasm. The protein resides in the cytoskeleton. It localises to the cilium axoneme. Its subcellular location is the flagellum axoneme. It is found in the microtubule organizing center. The protein localises to the centrosome. The protein resides in the centriole. It localises to the centriolar satellite. Its subcellular location is the spindle pole. It is found in the cell projection. The protein localises to the cilium. Its function is as follows. Microtubule inner protein (MIP) part of the dynein-decorated doublet microtubules (DMTs) in cilia axoneme, which is required for motile cilia beating. Regulates motility patterns of both 9+0 and 9+2 motile cilia through differential localization and recruitment of axonemal dynein components. Required for centriolar satellite integrity and non-motile cilium assembly. Required for motile cilium formation. Through its role in the beating of primary cilia, involved in the establishment of organ laterality during embryogenesis. Required for sperm flagellum biogenesis and is essential for male fertility. This is Cilia- and flagella-associated protein 53 from Homo sapiens (Human).